We begin with the raw amino-acid sequence, 301 residues long: Fructokinase (301 aa).

The Zn(2+) site is built by histidine 165, cysteine 181, histidine 184, and cysteine 187.

Belongs to the ROK (NagC/XylR) family. Requires Mg(2+) as cofactor.

The catalysed reaction is D-fructose + ATP = D-fructose 6-phosphate + ADP + H(+). Its activity is regulated as follows. Inhibition by zinc ions. This chain is Fructokinase (frk), found in Zymomonas mobilis subsp. mobilis (strain ATCC 31821 / ZM4 / CP4).